We begin with the raw amino-acid sequence, 384 residues long: 2-isopropylmalate synthase 2 (384 aa).

Residues 9 to 260 enclose the Pyruvate carboxyltransferase domain; the sequence is VYIVDTTLRD…DLGIDTSRFR (252 aa). 4 residues coordinate Mn(2+): D18, H198, H200, and N234.

It belongs to the alpha-IPM synthase/homocitrate synthase family. LeuA type 1 subfamily. In terms of assembly, homodimer. The cofactor is Mn(2+).

The protein resides in the cytoplasm. It carries out the reaction 3-methyl-2-oxobutanoate + acetyl-CoA + H2O = (2S)-2-isopropylmalate + CoA + H(+). Its pathway is amino-acid biosynthesis; L-leucine biosynthesis; L-leucine from 3-methyl-2-oxobutanoate: step 1/4. In terms of biological role, catalyzes the condensation of the acetyl group of acetyl-CoA with 3-methyl-2-oxobutanoate (2-ketoisovalerate) to form 3-carboxy-3-hydroxy-4-methylpentanoate (2-isopropylmalate). This chain is 2-isopropylmalate synthase 2, found in Caldanaerobacter subterraneus subsp. tengcongensis (strain DSM 15242 / JCM 11007 / NBRC 100824 / MB4) (Thermoanaerobacter tengcongensis).